The following is a 268-amino-acid chain: NAC transcription factor 29 (268 aa).

Residues 9–161 (LPPGFRFHPT…EWVLCRIYKK (153 aa)) enclose the NAC domain. Residues 106 to 167 (VGVKKALVFY…IYKKRGASKL (62 aa)) mediate DNA binding.

As to expression, expressed in senescing leaves, petals and sepals.

The protein resides in the nucleus. In terms of biological role, transcription activator that binds to, and transactivates the promoter of the abscisic aldehyde oxidase AAO3. Promotes chlorophyll degradation in leaves by enhancing transcription of AAO3, which leads to increased levels of the senescence-inducing hormone abscisic acid (ABA). Involved in the control of dehydration in senescing leaves. Binds to the DNA sequence 5'-CACGTAAGT-3' of SAG113 promoter. SAG113 acts as a negative regulator of ABA signaling for stomatal closure in leaves, and controls water loss during leaf senescence. Transcription factor of the NAC family involved in senescence. May function in the transition between active cell division and cell expansion. Required for normal seed development and morphology. This is NAC transcription factor 29 (NAC029) from Arabidopsis thaliana (Mouse-ear cress).